The following is a 158-amino-acid chain: 2-C-methyl-D-erythritol 2,4-cyclodiphosphate synthase (158 aa).

Positions 9 and 11 each coordinate a divalent metal cation. Residues Asp-9–His-11 and His-35–Ser-36 contribute to the 4-CDP-2-C-methyl-D-erythritol 2-phosphate site. Residue His-43 participates in a divalent metal cation binding. 4-CDP-2-C-methyl-D-erythritol 2-phosphate contacts are provided by residues Asp-57–Gly-59, Phe-62–Asp-66, Thr-133–Glu-136, Phe-140, and Arg-143.

Belongs to the IspF family. In terms of assembly, homotrimer. The cofactor is a divalent metal cation.

It carries out the reaction 4-CDP-2-C-methyl-D-erythritol 2-phosphate = 2-C-methyl-D-erythritol 2,4-cyclic diphosphate + CMP. It participates in isoprenoid biosynthesis; isopentenyl diphosphate biosynthesis via DXP pathway; isopentenyl diphosphate from 1-deoxy-D-xylulose 5-phosphate: step 4/6. Involved in the biosynthesis of isopentenyl diphosphate (IPP) and dimethylallyl diphosphate (DMAPP), two major building blocks of isoprenoid compounds. Catalyzes the conversion of 4-diphosphocytidyl-2-C-methyl-D-erythritol 2-phosphate (CDP-ME2P) to 2-C-methyl-D-erythritol 2,4-cyclodiphosphate (ME-CPP) with a corresponding release of cytidine 5-monophosphate (CMP). The chain is 2-C-methyl-D-erythritol 2,4-cyclodiphosphate synthase from Actinobacillus succinogenes (strain ATCC 55618 / DSM 22257 / CCUG 43843 / 130Z).